The following is a 292-amino-acid chain: Small ribosomal subunit protein uS3 (292 aa).

The KH type-2 domain occupies 39 to 110; it reads IRLEIMKFLK…KISIKIKEVK (72 aa). The tract at residues 247–268 is disordered; that stretch reads KANERQSRAALNKKDGLSKDET.

The protein belongs to the universal ribosomal protein uS3 family. In terms of assembly, part of the 30S ribosomal subunit. Forms a tight complex with proteins S10 and S14.

Functionally, binds the lower part of the 30S subunit head. Binds mRNA in the 70S ribosome, positioning it for translation. The sequence is that of Small ribosomal subunit protein uS3 from Borrelia garinii subsp. bavariensis (strain ATCC BAA-2496 / DSM 23469 / PBi) (Borreliella bavariensis).